A 493-amino-acid chain; its full sequence is Cysteine--tRNA ligase (493 aa).

Cysteine 29 is a binding site for Zn(2+). The 'HIGH' region signature appears at 31-41; sequence VTVYDLSHIGH. Residues cysteine 209, histidine 234, and glutamate 238 each contribute to the Zn(2+) site. The 'KMSKS' region motif lies at 266–270; the sequence is KMSKS. Lysine 269 provides a ligand contact to ATP.

The protein belongs to the class-I aminoacyl-tRNA synthetase family. As to quaternary structure, monomer. The cofactor is Zn(2+).

Its subcellular location is the cytoplasm. The catalysed reaction is tRNA(Cys) + L-cysteine + ATP = L-cysteinyl-tRNA(Cys) + AMP + diphosphate. The chain is Cysteine--tRNA ligase from Syntrophobacter fumaroxidans (strain DSM 10017 / MPOB).